Here is a 58-residue protein sequence, read N- to C-terminus: Large ribosomal subunit protein bL32c (58 aa).

The span at 1 to 19 (MAVPKKRKSKMKTRLRKAQ) shows a compositional bias: basic residues. Residues 1–25 (MAVPKKRKSKMKTRLRKAQWKSEAS) are disordered.

Belongs to the bacterial ribosomal protein bL32 family.

It is found in the plastid. The protein resides in the chloroplast. In Chlorella vulgaris (Green alga), this protein is Large ribosomal subunit protein bL32c (rpl32).